Consider the following 258-residue polypeptide: Imidazole glycerol phosphate synthase subunit HisF (258 aa).

Active-site residues include D11 and D130.

It belongs to the HisA/HisF family. Heterodimer of HisH and HisF.

Its subcellular location is the cytoplasm. It carries out the reaction 5-[(5-phospho-1-deoxy-D-ribulos-1-ylimino)methylamino]-1-(5-phospho-beta-D-ribosyl)imidazole-4-carboxamide + L-glutamine = D-erythro-1-(imidazol-4-yl)glycerol 3-phosphate + 5-amino-1-(5-phospho-beta-D-ribosyl)imidazole-4-carboxamide + L-glutamate + H(+). The protein operates within amino-acid biosynthesis; L-histidine biosynthesis; L-histidine from 5-phospho-alpha-D-ribose 1-diphosphate: step 5/9. Its function is as follows. IGPS catalyzes the conversion of PRFAR and glutamine to IGP, AICAR and glutamate. The HisF subunit catalyzes the cyclization activity that produces IGP and AICAR from PRFAR using the ammonia provided by the HisH subunit. The chain is Imidazole glycerol phosphate synthase subunit HisF from Prochlorococcus marinus (strain MIT 9211).